We begin with the raw amino-acid sequence, 438 residues long: tRNA wybutosine-synthesizing protein 2 homolog (438 aa).

S-adenosyl-L-methionine-binding positions include Ser209, Lys216, Glu256, and 284–285; that span reads DN.

It belongs to the class I-like SAM-binding methyltransferase superfamily. TRM5/TYW2 family.

The enzyme catalyses 4-demethylwyosine(37) in tRNA(Phe) + S-adenosyl-L-methionine = 4-demethyl-7-[(3S)-3-amino-3-carboxypropyl]wyosine(37) in tRNA(Phe) + S-methyl-5'-thioadenosine + H(+). The protein operates within tRNA modification; wybutosine-tRNA(Phe) biosynthesis. In terms of biological role, S-adenosyl-L-methionine-dependent transferase that acts as a component of the wybutosine biosynthesis pathway. Wybutosine is a hyper modified guanosine with a tricyclic base found at the 3'-position adjacent to the anticodon of eukaryotic phenylalanine tRNA. Catalyzes the transfer of the alpha-amino-alpha-carboxypropyl (acp) group from S-adenosyl-L-methionine to the C-7 position of 4-demethylwyosine (imG-14) to produce wybutosine-86. The chain is tRNA wybutosine-synthesizing protein 2 homolog (TRMT12) from Bos taurus (Bovine).